A 118-amino-acid polypeptide reads, in one-letter code: p-cumate 2,3-dioxygenase system, ferredoxin component (118 aa).

Residues Val14–Val111 form the Rieske domain. Positions 54, 56, 74, and 77 each coordinate [2Fe-2S] cluster.

It belongs to the bacterial ring-hydroxylating dioxygenase ferredoxin component family. In terms of assembly, the p-cumate 2,3-dioxygenase multicomponent enzyme system is composed of an electron transfer component and a dioxygenase component (iron sulfur protein (ISP)). The electron transfer component is composed of a ferredoxin reductase (CmtAa) and a ferredoxin (CmtAd), and the dioxygenase component is formed of a large alpha subunit (CmtAb) and a small beta subunit (CmtAc). The cofactor is [2Fe-2S] cluster.

Its pathway is aromatic compound metabolism; p-cumate degradation; acetaldehyde and pyruvate from p-cumate. Functionally, component of the p-cumate 2,3-dioxygenase multicomponent enzyme system which catalyzes the incorporation of both atoms of molecular oxygen into p-cumate to form cis-2,3-dihydroxy-2,3-dihydro-p-cumate. Functions as an intermediate electron transfer protein via a specific interaction with iron sulfur protein components (ISP)(CmtAb and CmtAc). This Pseudomonas putida (Arthrobacter siderocapsulatus) protein is p-cumate 2,3-dioxygenase system, ferredoxin component.